Here is a 553-residue protein sequence, read N- to C-terminus: Putative transport protein PM1071 (553 aa).

The next 5 membrane-spanning stretches (helical) occupy residues 4–24 (IAITISLLALVAVIGLWIGHW), 28–48 (GVGLGIGGVLFGGIIVAHFTN), 65–85 (FGLILFVYTIGIQVGPGFFAS), 91–111 (LKLNGFAALIVLLGSLAVIVI), and 157–177 (MAYAMAYPFGICGILLSMWLI). RCK C-terminal domains lie at 190 to 276 (KNFL…VLGE) and 277 to 361 (EVDV…ILGN). 6 helical membrane passes run 371–391 (MLPVFIGIGLGVLLGSIPFHI), 403–425 (AGGPLVVALILARIGSIGKLYWF), 439–459 (IVLFLAVVGLKSGGNFVDTLV), 464–484 (LEWMVYGIFITFVPLMIVGIV), 496–516 (LCGLLAGSMTDPPALAFANAI), and 533–553 (LVMFLRIISPQLLAILLWTLL).

Belongs to the AAE transporter (TC 2.A.81) family. YidE subfamily.

The protein localises to the cell membrane. In Pasteurella multocida (strain Pm70), this protein is Putative transport protein PM1071.